Reading from the N-terminus, the 39-residue chain is Photosystem I reaction center subunit IX (39 aa).

The helical transmembrane segment at 7–27 threads the bilayer; it reads FLTTAPVAFILFSSFVFALFI.

It belongs to the PsaJ family.

The protein resides in the cellular thylakoid membrane. Its function is as follows. May help in the organization of the PsaE and PsaF subunits. The chain is Photosystem I reaction center subunit IX from Synechococcus sp. (strain JA-3-3Ab) (Cyanobacteria bacterium Yellowstone A-Prime).